Consider the following 310-residue polypeptide: Ribose-phosphate pyrophosphokinase (310 aa).

Residues 34–36 (DQE) and 93–94 (RQ) each bind ATP. The Mg(2+) site is built by His127 and Asp167. Residue Lys190 is part of the active site. D-ribose 5-phosphate is bound by residues Arg192, Asp216, and 220–224 (DSGGT).

It belongs to the ribose-phosphate pyrophosphokinase family. Class I subfamily. In terms of assembly, homohexamer. Requires Mg(2+) as cofactor.

It localises to the cytoplasm. It catalyses the reaction D-ribose 5-phosphate + ATP = 5-phospho-alpha-D-ribose 1-diphosphate + AMP + H(+). It functions in the pathway metabolic intermediate biosynthesis; 5-phospho-alpha-D-ribose 1-diphosphate biosynthesis; 5-phospho-alpha-D-ribose 1-diphosphate from D-ribose 5-phosphate (route I): step 1/1. In terms of biological role, involved in the biosynthesis of the central metabolite phospho-alpha-D-ribosyl-1-pyrophosphate (PRPP) via the transfer of pyrophosphoryl group from ATP to 1-hydroxyl of ribose-5-phosphate (Rib-5-P). The polypeptide is Ribose-phosphate pyrophosphokinase (Brucella melitensis biotype 1 (strain ATCC 23456 / CCUG 17765 / NCTC 10094 / 16M)).